A 254-amino-acid polypeptide reads, in one-letter code: 5-keto-D-gluconate 5-reductase (254 aa).

Leu-13–Ile-37 serves as a coordination point for NADP(+). Residue Ser-145 coordinates substrate. Catalysis depends on Tyr-158, which acts as the Proton acceptor.

This sequence belongs to the short-chain dehydrogenases/reductases (SDR) family.

The catalysed reaction is D-gluconate + NAD(+) = 5-dehydro-D-gluconate + NADH + H(+). It catalyses the reaction D-gluconate + NADP(+) = 5-dehydro-D-gluconate + NADPH + H(+). The protein operates within carbohydrate acid metabolism; L-idonate degradation. In terms of biological role, catalyzes the reduction of 5-keto-D-gluconate to D-gluconate, using either NADH or NADPH. Is likely involved in an L-idonate degradation pathway that allows E.coli to utilize L-idonate as the sole carbon and energy source. Is also able to catalyze the reverse reaction in vitro, but the D-gluconate oxidation by the enzyme can only proceed with NAD. The sequence is that of 5-keto-D-gluconate 5-reductase from Escherichia coli O6:H1 (strain CFT073 / ATCC 700928 / UPEC).